We begin with the raw amino-acid sequence, 307 residues long: Beta-lactamase (307 aa).

Positions 1 to 26 are cleaved as a signal peptide; it reads MKLWFSTLKLKKAAAVLLFSCVALAG. Residue cysteine 27 is the site of N-palmitoyl cysteine attachment. The S-diacylglycerol cysteine moiety is linked to residue cysteine 27. Catalysis depends on serine 86, which acts as the Acyl-ester intermediate. Catalysis depends on glutamate 182, which acts as the Proton acceptor. 248-250 is a binding site for substrate; it reads KTG.

The protein belongs to the class-A beta-lactamase family. In terms of processing, large exopenicillinase is the primary secretion product; it can be converted to small exopenicillinase.

The protein resides in the cell membrane. It catalyses the reaction a beta-lactam + H2O = a substituted beta-amino acid. This Bacillus licheniformis protein is Beta-lactamase (penP).